A 368-amino-acid chain; its full sequence is Homoserine O-acetyltransferase (368 aa).

Positions 43 to 346 constitute an AB hydrolase-1 domain; that stretch reads ILLEHALTGT…EYGHDAFLVE (304 aa). The active-site Nucleophile is Ser-145. Arg-212 contacts substrate. Residues Asp-307 and His-340 contribute to the active site. A substrate-binding site is contributed by Asp-341.

It belongs to the AB hydrolase superfamily. MetX family. Homodimer.

It is found in the cytoplasm. It catalyses the reaction L-homoserine + acetyl-CoA = O-acetyl-L-homoserine + CoA. Its pathway is amino-acid biosynthesis; L-methionine biosynthesis via de novo pathway; O-acetyl-L-homoserine from L-homoserine: step 1/1. Functionally, transfers an acetyl group from acetyl-CoA to L-homoserine, forming acetyl-L-homoserine. The polypeptide is Homoserine O-acetyltransferase (Listeria innocua serovar 6a (strain ATCC BAA-680 / CLIP 11262)).